Here is a 327-residue protein sequence, read N- to C-terminus: Zinc transport protein ZntB (327 aa).

The Cytoplasmic portion of the chain corresponds to 1–271 (MDVVAGKALQ…AMNRRTYTMS (271 aa)). A helical transmembrane segment spans residues 272–292 (LLAMVFLPTTFLTGLFGVNLG). At 293–300 (GIPGNTDS) the chain is on the periplasmic side. The helical transmembrane segment at 301 to 321 (FGFATFCMMLVVLVLGVAWWL) threads the bilayer. Residues 322–327 (KHSKWL) lie on the Cytoplasmic side of the membrane.

It belongs to the CorA metal ion transporter (MIT) (TC 1.A.35) family.

The protein localises to the cell inner membrane. The enzyme catalyses Zn(2+)(out) + H(+)(out) = Zn(2+)(in) + H(+)(in). Zinc transporter. Acts as a Zn(2+):proton symporter, which likely mediates zinc ion uptake. The sequence is that of Zinc transport protein ZntB from Yersinia enterocolitica serotype O:8 / biotype 1B (strain NCTC 13174 / 8081).